A 723-amino-acid polypeptide reads, in one-letter code: BTB/POZ domain-containing protein 18 (723 aa).

The BTB domain occupies 34–102 (CDALLQAEGE…LYTSEMEVSQ (69 aa)). Disordered regions lie at residues 150–176 (APIS…PSPL), 188–350 (EGAH…EEGQ), and 370–394 (EPPL…PSGT). 2 stretches are compositionally biased toward polar residues: residues 162-174 (RPQT…QTPS) and 195-205 (NLPNADSLSDT). 2 stretches are compositionally biased toward low complexity: residues 217-227 (QESRSSPSSQR) and 271-286 (TSTP…SMPT). Composition is skewed to basic and acidic residues over residues 303 to 312 (QGVDKQKPGE) and 327 to 336 (KPAENKKQSP). Residue serine 414 is modified to Phosphoserine. The interval 603 to 637 (TPDLEITSSQPLDGQGEKLLHFDSSDPSQRSYNHL) is disordered. Basic and acidic residues predominate over residues 617–626 (QGEKLLHFDS). The segment covering 627 to 636 (SDPSQRSYNH) has biased composition (polar residues). 2 positions are modified to phosphoserine: serine 682 and serine 683. The segment at 699–723 (LGPTSVPSVWPDPSSESETEVDILT) is disordered. Over residues 713–723 (SESETEVDILT) the composition is skewed to acidic residues.

As to expression, expressed in testis.

The protein resides in the nucleus. Functionally, specifically required during spermatogenesis to promote expression of piRNA precursors. The piRNA metabolic process mediates the repression of transposable elements during meiosis by forming complexes composed of piRNAs and Piwi proteins and governs the methylation and subsequent repression of transposons, which is essential for the germline integrity. Acts by facilitating transcription elongation at piRNA loci during pachytene. The sequence is that of BTB/POZ domain-containing protein 18 from Mus musculus (Mouse).